The chain runs to 232 residues: Lipoprotein-releasing system ATP-binding protein LolD (232 aa).

The ABC transporter domain maps to 11–231 (VYLHDIRRQY…SLENGHVVEL (221 aa)). Position 47-54 (47-54 (APSGSGKS)) interacts with ATP.

This sequence belongs to the ABC transporter superfamily. Lipoprotein translocase (TC 3.A.1.125) family. The complex is composed of two ATP-binding proteins (LolD) and two transmembrane proteins (LolC and LolE).

The protein resides in the cell inner membrane. Functionally, part of the ABC transporter complex LolCDE involved in the translocation of mature outer membrane-directed lipoproteins, from the inner membrane to the periplasmic chaperone, LolA. Responsible for the formation of the LolA-lipoprotein complex in an ATP-dependent manner. The chain is Lipoprotein-releasing system ATP-binding protein LolD from Nitrobacter hamburgensis (strain DSM 10229 / NCIMB 13809 / X14).